We begin with the raw amino-acid sequence, 271 residues long: Dermonecrotic toxin LhSicTox-alphaIA2aiv (271 aa).

H3 is a catalytic residue. Positions 23 and 25 each coordinate Mg(2+). The Nucleophile role is filled by H39. Disulfide bonds link C43-C49 and C45-C188. Residue D83 coordinates Mg(2+).

Belongs to the arthropod phospholipase D family. Class II subfamily. It depends on Mg(2+) as a cofactor. Expressed by the venom gland.

It localises to the secreted. The catalysed reaction is an N-(acyl)-sphingosylphosphocholine = an N-(acyl)-sphingosyl-1,3-cyclic phosphate + choline. It carries out the reaction an N-(acyl)-sphingosylphosphoethanolamine = an N-(acyl)-sphingosyl-1,3-cyclic phosphate + ethanolamine. The enzyme catalyses a 1-acyl-sn-glycero-3-phosphocholine = a 1-acyl-sn-glycero-2,3-cyclic phosphate + choline. It catalyses the reaction a 1-acyl-sn-glycero-3-phosphoethanolamine = a 1-acyl-sn-glycero-2,3-cyclic phosphate + ethanolamine. Its function is as follows. Dermonecrotic toxins cleave the phosphodiester linkage between the phosphate and headgroup of certain phospholipids (sphingolipid and lysolipid substrates), forming an alcohol (often choline) and a cyclic phosphate. This toxin acts on sphingomyelin (SM). It may also act on ceramide phosphoethanolamine (CPE), lysophosphatidylcholine (LPC) and lysophosphatidylethanolamine (LPE), but not on lysophosphatidylserine (LPS), and lysophosphatidylglycerol (LPG). It acts by transphosphatidylation, releasing exclusively cyclic phosphate products as second products. Induces dermonecrosis, hemolysis, increased vascular permeability, edema, inflammatory response, and platelet aggregation. The protein is Dermonecrotic toxin LhSicTox-alphaIA2aiv of Loxosceles hirsuta (Recluse spider).